The sequence spans 216 residues: Endoplasmic reticulum vesicle protein 25 (216 aa).

Residues 1–25 (MGSSRLAMRSALGLFFLLFVQISLA) form the signal peptide. Over 26–185 (LKFDIAAGKG…TNESTNERVK (160 aa)) the chain is Lumenal. In terms of domain architecture, GOLD spans 36 to 126 (ERCIRNFVLK…HRSIELDVDI (91 aa)). The chain crosses the membrane as a helical span at residues 186–206 (WFAFGTMGMLVGLGVWQVIYL). Residues 207-216 (RAYFRSKHLI) are Cytoplasmic-facing.

It belongs to the EMP24/GP25L family.

Its subcellular location is the endoplasmic reticulum membrane. The protein resides in the golgi apparatus membrane. In terms of biological role, constituent of COPII-coated endoplasmic reticulum-derived transport vesicles. Required for efficient transport of a subset of secretory proteins to the Golgi. Facilitates retrograde transport from the Golgi to the endoplasmic reticulum. The sequence is that of Endoplasmic reticulum vesicle protein 25 (erv25) from Emericella nidulans (strain FGSC A4 / ATCC 38163 / CBS 112.46 / NRRL 194 / M139) (Aspergillus nidulans).